The sequence spans 326 residues: Glyoxylate/hydroxypyruvate reductase B (326 aa).

Catalysis depends on residues Arg237 and Glu266. The Proton donor role is filled by His285.

The protein belongs to the D-isomer specific 2-hydroxyacid dehydrogenase family. GhrB subfamily. As to quaternary structure, homodimer.

The protein resides in the cytoplasm. The enzyme catalyses glycolate + NADP(+) = glyoxylate + NADPH + H(+). It carries out the reaction (R)-glycerate + NAD(+) = 3-hydroxypyruvate + NADH + H(+). The catalysed reaction is (R)-glycerate + NADP(+) = 3-hydroxypyruvate + NADPH + H(+). Its function is as follows. Catalyzes the NADPH-dependent reduction of glyoxylate and hydroxypyruvate into glycolate and glycerate, respectively. This is Glyoxylate/hydroxypyruvate reductase B from Yersinia enterocolitica serotype O:8 / biotype 1B (strain NCTC 13174 / 8081).